The following is a 743-amino-acid chain: Dystrobrevin alpha (743 aa).

An interaction with MAGEE1 region spans residues 1–288 (MIEDSGKRGN…SHSNQHQMKE (288 aa)). The segment at 238–294 (FHPVECSYCHSESMMGFRYRCQQCHNYQLCQDCFWRGHAGGSHSNQHQMKEYTSWKS) adopts a ZZ-type zinc-finger fold. Positions 243, 246, 258, 261, 267, 270, 280, and 284 each coordinate Zn(2+). Residues 400–450 (DRLADEHVLIGLYVNMLRNNPSCMLESSNRLDEEHRLIARYAARLAAESSS) form a syntrophin-binding region region. A coiled-coil region spans residues 461–556 (DISFTIDANK…EGLMKLLKTQ (96 aa)). A disordered region spans residues 556-575 (QGAGSPRSSPSHTISRPIPM). The segment covering 557–569 (GAGSPRSSPSHTI) has biased composition (polar residues). The residue at position 662 (Ser-662) is a Phosphoserine.

It belongs to the dystrophin family. Dystrobrevin subfamily. In terms of assembly, interacts with dystrophin, utrophin and the syntrophins SNTA1, SNTB1, SNTB2, SNTG1 and SNTG2. Interacts with MAGEE1. Binds dystrobrevin binding protein 1. Interacts with CTNNAL1. The interaction is required for correct localization of both CTNNAL1 and DTNA. Does not interact with dystrophin. Phosphorylation of DTN-1 on tyrosine kinase substrate domain present in the C-terminus. As to expression, highly expressed in brain, skeletal and cardiac muscles, and expressed at lower levels in lung, liver and pancreas. Isoform 2 is not expressed in cardiac muscle. Isoform 7 and isoform 8 are only expressed in muscle.

It is found in the cytoplasm. Its subcellular location is the synapse. The protein resides in the cell membrane. In terms of biological role, may be involved in the formation and stability of synapses as well as being involved in the clustering of nicotinic acetylcholine receptors. The protein is Dystrobrevin alpha of Homo sapiens (Human).